We begin with the raw amino-acid sequence, 300 residues long: 33 kDa chaperonin (300 aa).

Intrachain disulfides connect cysteine 235–cysteine 237 and cysteine 269–cysteine 272.

It belongs to the HSP33 family. Post-translationally, under oxidizing conditions two disulfide bonds are formed involving the reactive cysteines. Under reducing conditions zinc is bound to the reactive cysteines and the protein is inactive.

The protein resides in the cytoplasm. Redox regulated molecular chaperone. Protects both thermally unfolding and oxidatively damaged proteins from irreversible aggregation. Plays an important role in the bacterial defense system toward oxidative stress. This is 33 kDa chaperonin from Pseudomonas syringae pv. syringae (strain B728a).